The sequence spans 317 residues: Malate dehydrogenase (317 aa).

Residues 13 to 18 (GAGNIG) and Asp-38 contribute to the NAD(+) site. The substrate site is built by Arg-87 and Arg-93. NAD(+) is bound by residues Asn-100 and 123 to 125 (VTN). Residues Asn-125 and Arg-156 each coordinate substrate. His-180 functions as the Proton acceptor in the catalytic mechanism.

It belongs to the LDH/MDH superfamily. MDH type 3 family.

The catalysed reaction is (S)-malate + NAD(+) = oxaloacetate + NADH + H(+). In terms of biological role, catalyzes the reversible oxidation of malate to oxaloacetate. The polypeptide is Malate dehydrogenase (Anaplasma marginale (strain Florida)).